A 442-amino-acid chain; its full sequence is ATP-dependent protease ATPase subunit HslU (442 aa).

ATP is bound by residues I18, 60–65, D255, E320, and R392; that span reads GVGKTE.

This sequence belongs to the ClpX chaperone family. HslU subfamily. As to quaternary structure, a double ring-shaped homohexamer of HslV is capped on each side by a ring-shaped HslU homohexamer. The assembly of the HslU/HslV complex is dependent on binding of ATP.

The protein resides in the cytoplasm. Its function is as follows. ATPase subunit of a proteasome-like degradation complex; this subunit has chaperone activity. The binding of ATP and its subsequent hydrolysis by HslU are essential for unfolding of protein substrates subsequently hydrolyzed by HslV. HslU recognizes the N-terminal part of its protein substrates and unfolds these before they are guided to HslV for hydrolysis. The polypeptide is ATP-dependent protease ATPase subunit HslU (Hahella chejuensis (strain KCTC 2396)).